A 320-amino-acid polypeptide reads, in one-letter code: GPI-specific phospholipase A2-like PGAP3 (320 aa).

The first 20 residues, 1–20 (MAERTARLLLLTVTVGLAWG), serve as a signal peptide directing secretion. Topologically, residues 21-98 (SQGDREPVYR…QFHGKWPFSR (78 aa)) are lumenal. Residue N40 is glycosylated (N-linked (GlcNAc...) asparagine). Residues 99–119 (FLFIQEPASAVASLLNGLASL) form a helical membrane-spanning segment. Topologically, residues 120–135 (VMLCRYRASVPASSPM) are cytoplasmic. Residues 136–156 (YHTCMAFAWVSLNAWFWSTVF) traverse the membrane as a helical segment. Over 157 to 169 (HTRDTDLTEKMDY) the chain is Lumenal. Residues 170–190 (FCASAVILHSIYLCCVRTVGL) form a helical membrane-spanning segment. Over 191–198 (QHPSVARA) the chain is Cytoplasmic. Residues 199-219 (FGATLLLMLLLHTSYLSLVRF) form a helical membrane-spanning segment. At 220 to 223 (DYSY) the chain is on the lumenal side. A helical transmembrane segment spans residues 224-244 (NMMANVAIGLVNLAWWLAWCL). At 245 to 258 (RNHRRLPHTRKCVA) the chain is on the cytoplasmic side. The chain crosses the membrane as a helical span at residues 259–279 (VVLLLQGLSLLELLDFPPLFW). The Lumenal portion of the chain corresponds to 280-282 (VLD). The chain crosses the membrane as a helical span at residues 283-303 (AHAIWHISTIPVHVLFFRFLE). Over 304 to 320 (DDSLYLLKESEAKFKLD) the chain is Cytoplasmic.

This sequence belongs to the PGAP3 family.

Its subcellular location is the golgi apparatus membrane. Involved in the fatty acid remodeling steps of GPI-anchor maturation where the unsaturated acyl chain at sn-2 of inositol phosphate is replaced by a saturated stearoyl chain. May catalyze the first step of the fatty acid remodeling, by removing the unsaturated acyl chain at sn-2 of inositol phosphate, generating a lyso-GPI intermediate. The fatty acid remodeling steps is critical for the integration of GPI-APs into lipid rafts. In Cricetulus griseus (Chinese hamster), this protein is GPI-specific phospholipase A2-like PGAP3 (PGAP3).